Consider the following 245-residue polypeptide: 1-(5-phosphoribosyl)-5-[(5-phosphoribosylamino)methylideneamino] imidazole-4-carboxamide isomerase (245 aa).

Asp8 acts as the Proton acceptor in catalysis. The active-site Proton donor is the Asp131.

Belongs to the HisA/HisF family.

Its subcellular location is the cytoplasm. It carries out the reaction 1-(5-phospho-beta-D-ribosyl)-5-[(5-phospho-beta-D-ribosylamino)methylideneamino]imidazole-4-carboxamide = 5-[(5-phospho-1-deoxy-D-ribulos-1-ylimino)methylamino]-1-(5-phospho-beta-D-ribosyl)imidazole-4-carboxamide. The protein operates within amino-acid biosynthesis; L-histidine biosynthesis; L-histidine from 5-phospho-alpha-D-ribose 1-diphosphate: step 4/9. The chain is 1-(5-phosphoribosyl)-5-[(5-phosphoribosylamino)methylideneamino] imidazole-4-carboxamide isomerase from Neisseria meningitidis serogroup C / serotype 2a (strain ATCC 700532 / DSM 15464 / FAM18).